A 93-amino-acid chain; its full sequence is Pyrimidine/purine nucleoside phosphorylase (93 aa).

It belongs to the nucleoside phosphorylase PpnP family.

The catalysed reaction is a purine D-ribonucleoside + phosphate = a purine nucleobase + alpha-D-ribose 1-phosphate. It carries out the reaction adenosine + phosphate = alpha-D-ribose 1-phosphate + adenine. The enzyme catalyses cytidine + phosphate = cytosine + alpha-D-ribose 1-phosphate. It catalyses the reaction guanosine + phosphate = alpha-D-ribose 1-phosphate + guanine. The catalysed reaction is inosine + phosphate = alpha-D-ribose 1-phosphate + hypoxanthine. It carries out the reaction thymidine + phosphate = 2-deoxy-alpha-D-ribose 1-phosphate + thymine. The enzyme catalyses uridine + phosphate = alpha-D-ribose 1-phosphate + uracil. It catalyses the reaction xanthosine + phosphate = alpha-D-ribose 1-phosphate + xanthine. Catalyzes the phosphorolysis of diverse nucleosides, yielding D-ribose 1-phosphate and the respective free bases. Can use uridine, adenosine, guanosine, cytidine, thymidine, inosine and xanthosine as substrates. Also catalyzes the reverse reactions. In Marinobacter nauticus (strain ATCC 700491 / DSM 11845 / VT8) (Marinobacter aquaeolei), this protein is Pyrimidine/purine nucleoside phosphorylase.